Here is a 553-residue protein sequence, read N- to C-terminus: Hydroxylamine reductase (553 aa).

Cysteine 3, cysteine 6, cysteine 15, and cysteine 21 together coordinate [4Fe-4S] cluster. Residues histidine 244, glutamate 268, cysteine 312, cysteine 406, cysteine 434, cysteine 459, glutamate 494, and lysine 496 each contribute to the hybrid [4Fe-2O-2S] cluster site. Cysteine persulfide is present on cysteine 406.

This sequence belongs to the HCP family. In terms of assembly, monomer. Requires [4Fe-4S] cluster as cofactor. Hybrid [4Fe-2O-2S] cluster is required as a cofactor.

The protein localises to the cytoplasm. It carries out the reaction A + NH4(+) + H2O = hydroxylamine + AH2 + H(+). Its function is as follows. Catalyzes the reduction of hydroxylamine to form NH(3) and H(2)O. This is Hydroxylamine reductase from Nitratidesulfovibrio vulgaris (strain ATCC 29579 / DSM 644 / CCUG 34227 / NCIMB 8303 / VKM B-1760 / Hildenborough) (Desulfovibrio vulgaris).